The primary structure comprises 318 residues: ADP-L-glycero-D-manno-heptose-6-epimerase (318 aa).

NADP(+) contacts are provided by residues 10-11, 31-32, lysine 38, lysine 53, and 79-83; these read FI, DD, and EGACS. Residue tyrosine 144 is the Proton acceptor of the active site. Lysine 148 is an NADP(+) binding site. Residue asparagine 173 participates in substrate binding. NADP(+)-binding residues include valine 174 and lysine 182. Residue lysine 182 is the Proton acceptor of the active site. Residues serine 184, histidine 191, 205-208, arginine 218, and tyrosine 282 each bind substrate; that span reads FEGC.

The protein belongs to the NAD(P)-dependent epimerase/dehydratase family. HldD subfamily. As to quaternary structure, homopentamer. It depends on NADP(+) as a cofactor.

It carries out the reaction ADP-D-glycero-beta-D-manno-heptose = ADP-L-glycero-beta-D-manno-heptose. The protein operates within nucleotide-sugar biosynthesis; ADP-L-glycero-beta-D-manno-heptose biosynthesis; ADP-L-glycero-beta-D-manno-heptose from D-glycero-beta-D-manno-heptose 7-phosphate: step 4/4. Functionally, catalyzes the interconversion between ADP-D-glycero-beta-D-manno-heptose and ADP-L-glycero-beta-D-manno-heptose via an epimerization at carbon 6 of the heptose. This Aeromonas hydrophila subsp. hydrophila (strain ATCC 7966 / DSM 30187 / BCRC 13018 / CCUG 14551 / JCM 1027 / KCTC 2358 / NCIMB 9240 / NCTC 8049) protein is ADP-L-glycero-D-manno-heptose-6-epimerase.